Consider the following 260-residue polypeptide: tRNA pseudouridine synthase B (260 aa).

H44 is a binding site for substrate. D49 serves as the catalytic Nucleophile. Substrate contacts are provided by Y77, Y180, and L201.

Belongs to the pseudouridine synthase TruB family. Type 1 subfamily.

It carries out the reaction uridine(55) in tRNA = pseudouridine(55) in tRNA. Functionally, responsible for synthesis of pseudouridine from uracil-55 in the psi GC loop of transfer RNAs. The protein is tRNA pseudouridine synthase B of Blochmanniella pennsylvanica (strain BPEN).